The sequence spans 395 residues: Bifunctional fatty acid conjugase/Delta(12)-oleate desaturase (395 aa).

A run of 2 helical transmembrane segments spans residues 73–93 and 97–117; these read FALA…LPKP and MAWP…WVIA. Positions 118 to 122 match the Histidine box-1 motif; sequence HECGH. Residues 130-150 form a helical membrane-spanning segment; sequence WVNDAVGFFLHTSLLVPYFPF. The Histidine box-2 signature appears at 154 to 158; it reads HRRHH. 3 helical membrane-spanning segments follow: residues 192–212, 236–256, and 264–284; these read VLTL…FNAS, FWVH…YRLA, and LLSI…LITF. The Histidine box-3 motif lies at 328-332; sequence HVIHH.

Belongs to the fatty acid desaturase type 1 family.

It localises to the membrane. It catalyses the reaction a (9Z,12Z)-octadecadienoyl-containing glycerolipid + 2 Fe(II)-[cytochrome b5] + O2 + 2 H(+) = a (9Z,11E,13Z)-octadeca-9,11,13-trienoyl-containing glycerolipid + 2 Fe(III)-[cytochrome b5] + 2 H2O. The protein operates within lipid metabolism; polyunsaturated fatty acid biosynthesis. Its function is as follows. Converts a single cis double bond at position 12 of linoleate incorporated into phosphatidylcholine into conjugated 11-trans and 13-cis double bonds. Produces punicic acid (18:3(9Z,11E,13Z)) from linoleic acid and conjugated octadecatetraenoic fatty acid from gamma-linolenic acid. No activity with cis- and trans-vaccenic acid, alpha-linolenic acid or homo-gamma-linolenic acid. 16:2(9Z,12Z), 18:3(9Z,12Z,15Z) and 18:2(9Z,12Z) are substrates for the conjugase to form trans-Delta(11) and cis-Delta(13) double bonds. No activity on the cis-Delta(9) double bonds of oleic and palmitoleic acids. This chain is Bifunctional fatty acid conjugase/Delta(12)-oleate desaturase, found in Punica granatum (Pomegranate).